The chain runs to 315 residues: NAD-dependent protein lipoamidase sirtuin-4, mitochondrial (315 aa).

Residues 1–29 (MRMSFGLTFKRTAKVHWRANFSQQCSLRS) constitute a mitochondrion transit peptide. The Deacetylase sirtuin-type domain maps to 38-315 (PPLDPEKVKE…GELLPLIDPR (278 aa)). NAD(+) contacts are provided by residues 63-83 (GAGI…VGLY) and 144-147 (QNVD). His-162 acts as the Proton acceptor in catalysis. Residues Cys-170, Cys-173, Cys-221, and Cys-224 each contribute to the Zn(2+) site. NAD(+)-binding positions include 261–263 (GSS), 287–289 (NIG), and Cys-305.

This sequence belongs to the sirtuin family. Class II subfamily. Interacts with GLUD1, IDE and SLC25A5. Interacts with DLAT and PDHX. Interacts with MCCC1 (via the biotin carboxylation domain). Interacts with PCCA and PC. The cofactor is Zn(2+).

It localises to the mitochondrion matrix. It catalyses the reaction N(6)-[(R)-lipoyl]-L-lysyl-[protein] + NAD(+) + H2O = 2''-O-lipoyl-ADP-D-ribose + nicotinamide + L-lysyl-[protein]. It carries out the reaction N(6)-biotinyl-L-lysyl-[protein] + NAD(+) + H2O = 2''-O-biotinyl-ADP-D-ribose + nicotinamide + L-lysyl-[protein]. The enzyme catalyses N(6)-acetyl-L-lysyl-[protein] + NAD(+) + H2O = 2''-O-acetyl-ADP-D-ribose + nicotinamide + L-lysyl-[protein]. The catalysed reaction is L-cysteinyl-[protein] + NAD(+) = S-(ADP-D-ribosyl)-L-cysteinyl-[protein] + nicotinamide + H(+). In terms of biological role, acts as a NAD-dependent protein lipoamidase, biotinylase, deacetylase and ADP-ribosyl transferase. Catalyzes more efficiently removal of lipoyl- and biotinyl- than acetyl-lysine modifications. Inhibits the pyruvate dehydrogenase complex (PDH) activity via the enzymatic hydrolysis of the lipoamide cofactor from the E2 component, DLAT, in a phosphorylation-independent manner. Catalyzes the transfer of ADP-ribosyl groups onto target proteins, including mitochondrial GLUD1, inhibiting GLUD1 enzyme activity. Acts as a negative regulator of mitochondrial glutamine metabolism by mediating mono ADP-ribosylation of GLUD1: expressed in response to DNA damage and negatively regulates anaplerosis by inhibiting GLUD1, leading to block metabolism of glutamine into tricarboxylic acid cycle and promoting cell cycle arrest. In response to mTORC1 signal, SIRT4 expression is repressed, promoting anaplerosis and cell proliferation. Acts as a tumor suppressor. Also acts as a NAD-dependent protein deacetylase: mediates deacetylation of 'Lys-471' of MLYCD, inhibiting its activity, thereby acting as a regulator of lipid homeostasis. Does not seem to deacetylate PC. Controls fatty acid oxidation by inhibiting PPARA transcriptional activation. Impairs SIRT1-PPARA interaction probably through the regulation of NAD(+) levels. Down-regulates insulin secretion. This Bos taurus (Bovine) protein is NAD-dependent protein lipoamidase sirtuin-4, mitochondrial.